Reading from the N-terminus, the 449-residue chain is Adenylosuccinate synthetase isozyme 1 A (449 aa).

Over residues 1 to 10 the composition is skewed to polar residues; the sequence is MSHKSCYTNP. A disordered region spans residues 1-22; that stretch reads MSHKSCYTNPGTGGKRPRNDKG. Residues 34–40 and 62–64 contribute to the GTP site; these read GDEGKGK and GHT. The Proton acceptor role is filled by aspartate 35. Mg(2+) contacts are provided by aspartate 35 and glycine 62. Residue aspartate 35 coordinates substrate. IMP contacts are provided by residues 35–38, 60–63, threonine 155, arginine 169, asparagine 248, threonine 263, and arginine 327; these read DEGK and NAGH. Residue histidine 63 is the Proton donor of the active site. Residue 323–329 coordinates substrate; that stretch reads VTTGRKR. Residues arginine 329, 355-357, and 437-440 contribute to the GTP site; these read KLD and GVGK.

The protein belongs to the adenylosuccinate synthetase family. As to quaternary structure, homodimer. Requires Mg(2+) as cofactor.

It is found in the cytoplasm. It catalyses the reaction IMP + L-aspartate + GTP = N(6)-(1,2-dicarboxyethyl)-AMP + GDP + phosphate + 2 H(+). Its pathway is purine metabolism; AMP biosynthesis via de novo pathway; AMP from IMP: step 1/2. Its function is as follows. Component of the purine nucleotide cycle (PNC), which interconverts IMP and AMP to regulate the nucleotide levels in various tissues, and which contributes to glycolysis and ammoniagenesis. Catalyzes the first committed step in the biosynthesis of AMP from IMP. This Salmo salar (Atlantic salmon) protein is Adenylosuccinate synthetase isozyme 1 A (adss1a).